The primary structure comprises 400 residues: F-box/kelch-repeat protein At4g19870 (400 aa).

Residues 1 to 10 (MKRQAKPPEK) are compositionally biased toward basic and acidic residues. The interval 1–33 (MKRQAKPPEKKTKRTTNASSPTPSSSSPSLSSL) is disordered. Positions 19–33 (SSPTPSSSSPSLSSL) are enriched in low complexity. Positions 27 to 73 (SPSLSSLPDEIVENCLARISRSYYPTLSIVSKSFRSIISSTELYVAR) constitute an F-box domain. Kelch repeat units lie at residues 146-192 (EIYV…LYDG), 194-240 (IYVI…RIAE), and 242-284 (EGKI…SVLY).

This is F-box/kelch-repeat protein At4g19870 from Arabidopsis thaliana (Mouse-ear cress).